Here is a 361-residue protein sequence, read N- to C-terminus: Peptide chain release factor 1 (361 aa).

N5-methylglutamine is present on Q236.

This sequence belongs to the prokaryotic/mitochondrial release factor family. Post-translationally, methylated by PrmC. Methylation increases the termination efficiency of RF1.

The protein resides in the cytoplasm. Functionally, peptide chain release factor 1 directs the termination of translation in response to the peptide chain termination codons UAG and UAA. In Lactobacillus acidophilus (strain ATCC 700396 / NCK56 / N2 / NCFM), this protein is Peptide chain release factor 1.